Here is a 92-residue protein sequence, read N- to C-terminus: Acylphosphatase (92 aa).

The region spanning 3-90 (RVHVLVAGRV…GEFTEFAVLR (88 aa)) is the Acylphosphatase-like domain. Active-site residues include R18 and N36.

Belongs to the acylphosphatase family.

The catalysed reaction is an acyl phosphate + H2O = a carboxylate + phosphate + H(+). The sequence is that of Acylphosphatase (acyP) from Methylococcus capsulatus (strain ATCC 33009 / NCIMB 11132 / Bath).